Here is a 464-residue protein sequence, read N- to C-terminus: tRNA modification GTPase MnmE (464 aa).

Residues Arg26, Glu92, and Arg131 each coordinate (6S)-5-formyl-5,6,7,8-tetrahydrofolate. Positions 227–385 (GIKVAILGRV…LISALKDYVS (159 aa)) constitute a TrmE-type G domain. Asn237 contributes to the K(+) binding site. GTP contacts are provided by residues 237–242 (NAGKSS), 256–262 (SNIAGTT), and 281–284 (DTAG). Ser241 lines the Mg(2+) pocket. K(+) is bound by residues Ser256, Ile258, and Thr261. Thr262 provides a ligand contact to Mg(2+). Residue Lys464 coordinates (6S)-5-formyl-5,6,7,8-tetrahydrofolate.

Belongs to the TRAFAC class TrmE-Era-EngA-EngB-Septin-like GTPase superfamily. TrmE GTPase family. As to quaternary structure, homodimer. Heterotetramer of two MnmE and two MnmG subunits. K(+) serves as cofactor.

The protein resides in the cytoplasm. In terms of biological role, exhibits a very high intrinsic GTPase hydrolysis rate. Involved in the addition of a carboxymethylaminomethyl (cmnm) group at the wobble position (U34) of certain tRNAs, forming tRNA-cmnm(5)s(2)U34. This Brachyspira hyodysenteriae (strain ATCC 49526 / WA1) protein is tRNA modification GTPase MnmE.